We begin with the raw amino-acid sequence, 162 residues long: UPF0260 protein CC_3276 (162 aa).

It belongs to the UPF0260 family.

This chain is UPF0260 protein CC_3276, found in Caulobacter vibrioides (strain ATCC 19089 / CIP 103742 / CB 15) (Caulobacter crescentus).